A 364-amino-acid chain; its full sequence is MNDVHNFNAGPAALPKQALERAQKELVNFDGTGMSVMELSHRGDTYDRIHTHAIKKIRKLLDVPDDYHILFLQGGASLQFPMVPMNFLDSQATYILTGAWSEKALAEAKHFGKTVIGASGKDGNYKQIPALNQISEHAQDSYVHMTSNNTIYGTQWHAFPNTKAPLVCDMSSDIFSRRIPVNQFGLIYAGAQKNLGPSGVTLVLIQDAFLQRAKSGLPAMLSYDTFVKSNSLYNTPPVFSIYMLGLVLDWLEESGGLTEIENRNKAKAQLLYEAIDESDGFYIGHAAQDSRSNMNVTFTLANDALTSVFLQEAKEAGFVGLNGHRSVGGLRASIYNAVPYASCEALVDFMKQFKNKHAEKGATV.

Arg42 contacts L-glutamate. Pyridoxal 5'-phosphate contacts are provided by residues 76 to 77 (AS), Trp100, Thr150, Asp169, and Gln192. N6-(pyridoxal phosphate)lysine is present on Lys193. 234–235 (NT) serves as a coordination point for pyridoxal 5'-phosphate.

This sequence belongs to the class-V pyridoxal-phosphate-dependent aminotransferase family. SerC subfamily. As to quaternary structure, homodimer. Pyridoxal 5'-phosphate serves as cofactor.

The protein resides in the cytoplasm. It catalyses the reaction O-phospho-L-serine + 2-oxoglutarate = 3-phosphooxypyruvate + L-glutamate. It carries out the reaction 4-(phosphooxy)-L-threonine + 2-oxoglutarate = (R)-3-hydroxy-2-oxo-4-phosphooxybutanoate + L-glutamate. The protein operates within amino-acid biosynthesis; L-serine biosynthesis; L-serine from 3-phospho-D-glycerate: step 2/3. Catalyzes the reversible conversion of 3-phosphohydroxypyruvate to phosphoserine and of 3-hydroxy-2-oxo-4-phosphonooxybutanoate to phosphohydroxythreonine. The sequence is that of Phosphoserine aminotransferase from Shouchella clausii (strain KSM-K16) (Alkalihalobacillus clausii).